We begin with the raw amino-acid sequence, 101 residues long: Small ribosomal subunit protein uS14A (101 aa).

The interval 31–59 (IRSPASSPEQRVAAQSELNRQPRDASAVR) is disordered.

The protein belongs to the universal ribosomal protein uS14 family. As to quaternary structure, part of the 30S ribosomal subunit. Contacts proteins S3 and S10.

In terms of biological role, binds 16S rRNA, required for the assembly of 30S particles and may also be responsible for determining the conformation of the 16S rRNA at the A site. The protein is Small ribosomal subunit protein uS14A of Mycobacteroides abscessus (strain ATCC 19977 / DSM 44196 / CCUG 20993 / CIP 104536 / JCM 13569 / NCTC 13031 / TMC 1543 / L948) (Mycobacterium abscessus).